The following is a 405-amino-acid chain: Dynactin subunit 2 (405 aa).

Positions 1–25 (MADPKYADLPGIARNEPDVYETSDL) are disordered. An N-acetylalanine modification is found at A2. Residue Y6 is modified to Phosphotyrosine. Position 85 is a phosphoserine (S85). Y88 is modified (phosphotyrosine). A coiled-coil region spans residues 105–132 (YQRLLHEVQELTTEVEKIKMTVKESATE). T136 is subject to Phosphothreonine. Residues 187–207 (KNTKGAGSGGKTTSGSPPDSS) form a disordered region. S324 is modified (phosphoserine).

Belongs to the dynactin subunit 2 family. Subunit of dynactin, a multiprotein complex part of a tripartite complex with dynein and a adapter, such as BICDL1, BICD2 or HOOK3. The dynactin complex is built around ACTR1A/ACTB filament and consists of an actin-related filament composed of a shoulder domain, a pointed end and a barbed end. Its length is defined by its flexible shoulder domain. The soulder is composed of 2 DCTN1 subunits, 4 DCTN2 and 2 DCTN3. The 4 DCNT2 (via N-terminus) bind the ACTR1A filament and act as molecular rulers to determine the length. The pointed end is important for binding dynein-dynactin cargo adapters and consists of 4 subunits: ACTR10, DCNT4, DCTN5 and DCTN6. The barbed end is composed of a CAPZA1:CAPZB heterodimers, which binds ACTR1A/ACTB filament and dynactin and stabilizes dynactin. Interacts with BICD2 and CEP135. Interacts with DYNAP. Interacts with ECPAS. Interacts with MAPRE1.

Its subcellular location is the cytoplasm. It is found in the cytoskeleton. It localises to the microtubule organizing center. The protein resides in the centrosome. The protein localises to the membrane. Part of the dynactin complex that activates the molecular motor dynein for ultra-processive transport along microtubules. In the dynactin soulder domain, binds the ACTR1A filament and acts as a molecular ruler to determine the length. Modulates cytoplasmic dynein binding to an organelle, and plays a role in prometaphase chromosome alignment and spindle organization during mitosis. Involved in anchoring microtubules to centrosomes. May play a role in synapse formation during brain development. The polypeptide is Dynactin subunit 2 (DCTN2) (Sus scrofa (Pig)).